The chain runs to 92 residues: uncharacterized protein (92 aa).

This is an uncharacterized protein from Escherichia coli O157:H7.